The primary structure comprises 572 residues: Alpha-1D adrenergic receptor (572 aa).

Positions 1-77 (MTFRDLLSVS…SAGEPGSAGA (77 aa)) are disordered. Residues 1 to 95 (MTFRDLLSVS…AVGGLVVSAQ (95 aa)) are Extracellular-facing. Composition is skewed to gly residues over residues 23–33 (SSAGGGGGSAG) and 42–61 (AVGG…GAGS). Asparagine 65 and asparagine 82 each carry an N-linked (GlcNAc...) asparagine glycan. Residues 96–121 (GVGVGVFLAAFILMAVAGNLLVILSV) traverse the membrane as a helical segment. Residues 122-133 (ACNRHLQTVTNY) are Cytoplasmic-facing. Residues 134–159 (FIVNLAVADLLLSATVLPFSATMEVL) traverse the membrane as a helical segment. The Extracellular portion of the chain corresponds to 160-169 (GFWAFGRAFC). A helical transmembrane segment spans residues 170 to 192 (DVWAAVDVLCCTASILSLCTISV). Residues 193–213 (DRYVGVRHSLKYPAIMTERKA) are Cytoplasmic-facing. Residues 214 to 238 (AAILALLWVVALVVSVGPLLGWKEP) form a helical membrane-spanning segment. Over 239–251 (VPPDERFCGITEE) the chain is Extracellular. A helical membrane pass occupies residues 252-275 (AGYAVFSSVCSFYLPMAVIVVMYC). At 276 to 348 (RVYVVARSTT…KFSREKKAAK (73 aa)) the chain is on the cytoplasmic side. Residues 349 to 373 (TLAIVVGVFVLCWFPFFFVLPLGSL) form a helical membrane-spanning segment. Residues 374–380 (FPQLKPS) are Extracellular-facing. The helical transmembrane segment at 381 to 405 (EGVFKVIFWLGYFNSCVNPLIYPCS) threads the bilayer. Over 406 to 572 (SREFKRAFLR…DYSNLRETDI (167 aa)) the chain is Cytoplasmic. Residue cysteine 419 is the site of S-palmitoyl cysteine attachment. The interval 444-488 (GLRQDCAPSSGDAPPGAPLALTALPDPDPEPPGTPEMQAPVASRR) is disordered. Positions 450–468 (APSSGDAPPGAPLALTALP) are enriched in low complexity.

Belongs to the G-protein coupled receptor 1 family. Adrenergic receptor subfamily. ADRA1D sub-subfamily. As to quaternary structure, interacts with FLNA (via filamin repeat 21); increases PKA-mediated phosphorylation of FLNA. Palmitoylated. Palmitoylation by ZDHHC21 may increase the expression of the receptor and regulate downstream signaling.

The protein resides in the cell membrane. This alpha-adrenergic receptor mediates its effect through the influx of extracellular calcium. The sequence is that of Alpha-1D adrenergic receptor (ADRA1D) from Homo sapiens (Human).